Reading from the N-terminus, the 59-residue chain is U-myrmeciitoxin(01)-Mg5b (59 aa).

Positions 1 to 21 are cleaved as a signal peptide; the sequence is MRLSYLSLALAIIFVLTIMHA. The propeptide occupies 22-38; sequence SNVEAKASADPEPDAVG.

As to expression, expressed by the venom gland.

The protein localises to the secreted. Functionally, may have antimicrobial properties, like most ant linear peptides. The chain is U-myrmeciitoxin(01)-Mg5b from Myrmecia gulosa (Red bulldog ant).